Consider the following 68-residue polypeptide: Large ribosomal subunit protein uL30 (68 aa).

The protein belongs to the universal ribosomal protein uL30 family. Part of the 50S ribosomal subunit.

The protein is Large ribosomal subunit protein uL30 of Bartonella quintana (strain Toulouse) (Rochalimaea quintana).